We begin with the raw amino-acid sequence, 317 residues long: SWI/SNF-related matrix-associated actin-dependent regulator of chromatin subfamily E member 1-related (317 aa).

Residues 1–22 (MSHGPKQPGAASAPASGKAPGQ) are compositionally biased toward low complexity. The tract at residues 1-71 (MSHGPKQPGA…RKKILPNGPK (71 aa)) is disordered. Lysine 31 is covalently cross-linked (Glycyl lysine isopeptide (Lys-Gly) (interchain with G-Cter in SUMO2)). The span at 31–52 (KQERGEGPRAGEKGSHEEEPVK) shows a compositional bias: basic and acidic residues. Over residues 53–65 (KRGWPKGKKRKKI) the composition is skewed to basic residues. Positions 70-138 (PKAPVTGYVR…QYMKELRAYQ (69 aa)) form a DNA-binding region, HMG box. Serine 160 is subject to Phosphoserine. A coiled-coil region spans residues 190 to 257 (EEFLDQNKAR…LQQQLQAVRQ (68 aa)).

Component of a BHC histone deacetylase complex that contains HDAC1, HDAC2, HMG20B/BRAF35, KDM1A, RCOR1/CoREST and PHF21A/BHC80. The BHC complex may also contain ZMYM2, ZNF217, ZMYM3, GSE1 and GTF2I. Interacts with the BRCA2 tumor suppressor protein.

It is found in the nucleus. Its subcellular location is the chromosome. Its function is as follows. Required for correct progression through G2 phase of the cell cycle and entry into mitosis. Required for RCOR1/CoREST mediated repression of neuronal specific gene promoters. The polypeptide is SWI/SNF-related matrix-associated actin-dependent regulator of chromatin subfamily E member 1-related (HMG20B) (Bos taurus (Bovine)).